Here is a 576-residue protein sequence, read N- to C-terminus: Quinone-reactive Ni/Fe-hydrogenase large chain (576 aa).

Residues cysteine 62, cysteine 65, cysteine 547, and cysteine 550 each contribute to the Ni(2+) site.

This sequence belongs to the [NiFe]/[NiFeSe] hydrogenase large subunit family. As to quaternary structure, heterodimer of a large and a small subunit. The cofactor is Ni(2+).

It localises to the cell membrane. It carries out the reaction H2 + a menaquinone = a menaquinol. Its function is as follows. This enzyme recycles the H(2) produced by nitrogenase to increase the production of ATP and to protect nitrogenase against inhibition or damage by O(2) under carbon- or phosphate-limited conditions. In Wolinella succinogenes (strain ATCC 29543 / DSM 1740 / CCUG 13145 / JCM 31913 / LMG 7466 / NCTC 11488 / FDC 602W) (Vibrio succinogenes), this protein is Quinone-reactive Ni/Fe-hydrogenase large chain (hydB).